A 65-amino-acid polypeptide reads, in one-letter code: Antimicrobial peptide THP1 (65 aa).

The N-terminal stretch at 1–25 is a signal peptide; the sequence is MRIVYLLFPFILLLAQGAAGSSLAL. 3 disulfides stabilise this stretch: C31/C53, C38/C59, and C43/C60. The propeptide occupies 61–65; the sequence is KTLLG.

The protein belongs to the beta-defensin family.

The protein localises to the secreted. Bactericidal activity; inhibits S.aureus and E.coli. The chain is Antimicrobial peptide THP1 from Meleagris gallopavo (Wild turkey).